We begin with the raw amino-acid sequence, 1098 residues long: Probable arabinosyltransferase B (1098 aa).

Helical transmembrane passes span 28–50 (WVAT…LPVV), 217–239 (LKLL…LWRL), 271–293 (ASWR…WHVI), 402–419 (LRPE…YVLI), 434–456 (AVVT…AALV), 472–494 (LVGT…TVVF), 541–558 (FGFL…FIML), 570–587 (PAWR…FLMF), 597–619 (GLFA…PSVL), 626–648 (MAFL…GWWY), 663–685 (IDGI…YAAW), and 698–720 (LIRA…VFVA).

It belongs to the emb family.

The protein localises to the cell membrane. In terms of biological role, arabinosyl transferase responsible for the polymerization of arabinose into the arabinan of arabinogalactan. The sequence is that of Probable arabinosyltransferase B (embB) from Mycobacterium bovis (strain ATCC BAA-935 / AF2122/97).